Reading from the N-terminus, the 463-residue chain is Exodeoxyribonuclease 7 large subunit (463 aa).

Belongs to the XseA family. As to quaternary structure, heterooligomer composed of large and small subunits.

It localises to the cytoplasm. It catalyses the reaction Exonucleolytic cleavage in either 5'- to 3'- or 3'- to 5'-direction to yield nucleoside 5'-phosphates.. Functionally, bidirectionally degrades single-stranded DNA into large acid-insoluble oligonucleotides, which are then degraded further into small acid-soluble oligonucleotides. This is Exodeoxyribonuclease 7 large subunit from Pseudomonas syringae pv. syringae (strain B728a).